A 140-amino-acid chain; its full sequence is MWPFRLRCPIYFKTRLLYSSSQDGFLSSSTNYYNHRTYPGLVNWLFVLTEPELTGELGDDDRKGMHTGGIIRWLGRPSSQLKPIFHAEERRVPPPPERLVGRASPREQATVFKRICAPLHAEVFCRAGLCACHPDCTAAG.

This is an uncharacterized protein from Homo sapiens (Human).